Here is a 2567-residue protein sequence, read N- to C-terminus: MAISSRLALWEQKIREEDKSPPPSSPPPLFSVIPGGFIKQLVRGTEKEAKEARQRKQLAVASPEREIPEISISQPNSKSSSGTRSGSQQISQDDQSSSPGSSDILGKESEGSRSPDPEQMTSINGEKAQELGSSATPTKKTVPFKRGVRRGDVLLMVAKLDPDSAKPEKTHPHDAPPCKTSPPATDTGKEKKGETSRTPCGSQASTEILAPKAEKTRTGGLGDPGQGTVALKKGEEGQSIVGKGLGTPKTTELKEAEPQGKDRQGTRPQAQGPGEGVRPGKAEKEGAEPTNTVEKGNVSKDVGSEGKHVRPQIPGRKWGGFLGRRSKWDGPQNKKDKEGVLLSKAEKTGEPQTQMEKTSQVQGELGDDLRMGEKAGELRSTTGKAGESWDKKEKMGQPQGKSGNAGEARSQTEKGCEAPKEVSTMVESPAAPGKGGWPGSRGQEAEEPCSRAGDGAGALETELEGPSQPALEKDAERPRIRKENQDGPAPQEEGKGGQSRDSDQAPEDRWYEAEKVWLAQKDGFTLATVLKPDEGTADLPAGRVRLWIDADKTITEVDEEHVHRANPPELDQVEDLASLISVNESSVLNTLLQRYKAQLLHTCTGPDLIVLQPRGPSVPSAGKVPKGRRDGLPAHIGSMAQRAYWALLNQRRDQSIVALGWSGAGKTTCCEQVLEHLVGMAGSVDGRVSVEKIRATFTVLRAFGSVSMAHSRSATRFSMVMSLDFNATGRITAAQLQTMLLEKSRVARQPEGESNFLVFSQMLAGLDLDLRTELNLHQMADSSSFGMGVWSKPEDKQKAAAAFAQLQGAMEMLGISESEQRAVWRVLAAIYHLGAAGACKVGRKQFMRFEWANYAAEALGCEYEELNTATFKHHLRQIIQQMTFGPSRWGLEDEETSSGLKMTGVDCVEGMASGLYQELFAAVVSLINRSFSSHHLSMASIMVVDSPGFQNPRHQGKDRAATFEELCHNYAHERLQLLFYQRTFVSTLQRYQEEGVPVQFDLPDPSPGTTVAVVDQNPSQVRLPAGGGAQDARGLFWVLDEEVHVEGSSDSVVLERLCAAFEKKGAGTEGSSALRTCEQPLQCEIFHQLGWDPVRYDLTGWLHRAKPNLSALDAPQVLHQSKREELRSLFQARAKLPPVCRAVAGLEGTSQQALQRSRMVRRTFASSLAAVRRKAPCSQIKLQMDALTSMIKRSRLHFIHCLVPNPVVESRSGQESPPPPQPGRDKPGAGGPLALDIPALRVQLAGFHILEALRLHRTGYADHMGLTRFRRQFQVLDAPLLKKLMSTSEGIDERKAVEELLETLDLEKKAVAVGHSQVFLKAGVISRLEKQREKLVSQSIVLFQAACKGFLSRQEFKKLKIRRLAAQCIQKNVAVFLAVKDWPWWQLLGSLQPLLSATIGTEQLRAKEEELTTLRRKLEKSEKLRNELRQNTDLLESKIADLTSDLADERFKGDVACQVLESERAERLQAFREVQELKSKHEQVQKKLGDVNKQLEEAQQKIQLNDLERNPTGGADEWQMRFDCAQMENEFLRKRLQQCEERLDSELTARKELEQKLGELQSAYDGAKKMAHQLKRKCHHLTCDLEDTCVLLENQQSRNHELEKKQKKFDLQLAQALGESVFEKGLREKVTQENTSVRWELGQLQQQLKQKEQEASQLKQQVEMLQDHKRELLGSPSLGENCVAGLKERLWKLESSALEQQKIQSQQENTIKQLEQLRQRFELEIERMKQMHQKDREDQEEELEDVRQSCQKRLHQLEMQLEQEYEEKQMVLHEKQDLEGLIGTLCDQIGHRDFDVEKRLRRDLRRTHALLSDVQLLLGTMEDGKTSVSKEELEKVHSQLEQSEAKCEEALKTQKVLTADLESMHSELENMTRNKSLVDEQLYRLQFEKADLLKRIDEDQDDLNELMQKHKDLIAQSAADIGQIQELQLQLEEAKKEKHKLQEQLQVAQMRIEYLEQSTVDRAIVSRQEAVICDLENKTEFQKVQIKRFEVLVIRLRDSLIKMGEELSQAATSESQQRESSQYYQRRLEELKADMEELVQREAEASRRCMELEKYVEELAAVRQTLQTDLETSIRRIADLQAALEEVASSDSDTESVQTAVDCGSSGRKEMDNVSILSSQPEGSLQSWLSCTLSLATDTMRTPSRQSATSSRILSPRINEEAGDTERTQSALALSRARSTNVHSKTSGDKPVSPHFVRRQKYCHFGDGEVLAVQRKSTERLEPASSPLASRSTNTSPLSREKLPSPSAALSEFVEGLRRKRAQRGQGSTLGLEDWPTLPIYQTTGASTLRRGRAGSDEGNLSLRVGAKSPLEIEGAAGGLLRSTSLKCISSDGVGGTTLLPEKSKTQFSSCESLLESRPSMGRKLSSPTTPRDMLLSPTLRPRRRCLESSVDDAGCPDLGKEPLVFQNRQFAHLMEEPLGSDPFSWKLPSLDYERKTKVDFDDFLPAIRKPQTPTSLAGSAKGGQDGSQRSSIHFETEEANRSFLSGIKTILKKSPEPKEDPAHLSDSSSSSGSIVSFKSADSIKSRPGIPRLAGDGGERTSPERREPGTGRKDDDVASIMKKYLQK.

The disordered stretch occupies residues Leu-41–Asp-508. The segment covering Gly-44–Gln-54 has biased composition (basic and acidic residues). Positions Ser-71–Ile-104 are enriched in low complexity. 2 stretches are compositionally biased toward basic and acidic residues: residues Leu-105–Asp-116 and Leu-160–Pro-176. Over residues Ser-196 to Thr-206 the composition is skewed to polar residues. Composition is skewed to basic and acidic residues over residues Thr-251 to Gly-265, Arg-278 to Ala-287, and Ser-326 to Gly-349. Over residues Glu-350 to Gln-362 the composition is skewed to polar residues. Composition is skewed to basic and acidic residues over residues Asp-367–Glu-377, Ser-410–Lys-420, Leu-471–Gln-485, and Glu-492–Asp-508. Residues Asp-571–Glu-1333 form the Myosin motor domain. Gly-660–Thr-667 lines the ATP pocket. Positions Val-1208–Pro-1232 are disordered. The interval Gly-1213–Leu-1240 is GPA. The residue at position 1216 (Ser-1216) is a Phosphoserine. An IQ domain is found at Val-1336–Ala-1365. 3 coiled-coil regions span residues Ser-1396–Gly-1783, Lys-1825–Asp-1961, and Glu-2014–Ser-2090. A tail region spans residues Asn-1426–Ala-2083. A Phosphoserine modification is found at Ser-1829. Residues Thr-2139–Ile-2153 are compositionally biased toward polar residues. Disordered stretches follow at residues Thr-2139–Pro-2194 and Ser-2217–Ala-2249. Over residues Ile-2158 to Arg-2167 the composition is skewed to basic and acidic residues. The segment covering Thr-2168–Lys-2185 has biased composition (polar residues). Ser-2193 carries the phosphoserine modification. A compositionally biased stretch (polar residues) spans Pro-2227 to Leu-2238. Residues Ser-2296 and Ser-2309 each carry the phosphoserine modification. Positions Ser-2357–Leu-2376 are disordered. At Ser-2377 the chain carries Phosphoserine. Disordered regions lie at residues Phe-2444 to Ser-2471 and Lys-2494 to Lys-2567. The segment covering Lys-2494–His-2504 has biased composition (basic and acidic residues). Residues Ser-2506–Ser-2520 are compositionally biased toward low complexity. Residues Gly-2537–Asp-2556 show a composition bias toward basic and acidic residues.

The protein belongs to the TRAFAC class myosin-kinesin ATPase superfamily. Myosin family. In terms of assembly, homodimer. May interact with F actin through the GPA motif (Gly/Pro/Ala-rich). Selectively expressed in cardiac and skeletal muscles. Weakly expressed in testis, pancreas, placenta, prostate, lung and thymus.

The protein resides in the cytoplasm. The protein localises to the nucleus. It localises to the myofibril. Its subcellular location is the sarcomere. Its function is as follows. May be involved in intracellular trafficking of the muscle cell when in the cytoplasm, whereas entering the nucleus, may be involved in the regulation of muscle specific genes. May play a role in the control of tumor development and progression; restored MYO18B expression in lung cancer cells suppresses anchorage-independent growth. This chain is Unconventional myosin-XVIIIb (MYO18B), found in Homo sapiens (Human).